A 410-amino-acid chain; its full sequence is MKSEILCVGTEILLGDIVNTNSQFISKELANLGIEVYHQSVVGDNPQRLLDELKLGFERSDIIITTGGLGPTQDDLTKETGAKFFNRELVLDKKSLKELKEHFNRMGKSYSDGNNIKQAYFPKGSTIFPNPYGTAPGCAIEDKGKILIVLPGPPRETKPMFKNYVIPLLKKYSNGIIKSKTLRIYGLGESAMAERVSPFIENSTNPTVAPYAKEEDIILRITARAAEEKEALSLIEPVEIELRKILGVNVYGEDDVKMEEVLGRLLIDKGYTLSCAESCTGGLIASKLINYPGISKAFKEGVVAYSNEAKIKRLGVKKDTLDKYGAVSPEVAKEMAIGIAETSNTDIGISTTGIAGPDGGTPEKPIGLVYLGLYNRGEIKVKELRHAGTRDMIRKRATMNALDWIRRQIL.

Belongs to the CinA family.

The chain is Putative competence-damage inducible protein from Clostridium kluyveri (strain NBRC 12016).